The chain runs to 195 residues: Cysteine/O-acetylserine efflux protein (195 aa).

Topologically, residues 1–9 (MTPMLLSAF) are periplasmic. Residues 10 to 32 (WTYTLITALTPGPNNILALSAAT) form a helical membrane-spanning segment. The Cytoplasmic segment spans residues 33–46 (AHGFRQSIRVLAGM). The helical transmembrane segment at 47-67 (SLGFLVVMLLCAGIAFSLAVI) threads the bilayer. Topologically, residues 68 to 69 (DP) are periplasmic. The helical transmembrane segment at 70 to 90 (AIIHLLSWVGAAYILWLAWKI) threads the bilayer. Residues 91–104 (ATSPAADENARPKP) are Cytoplasmic-facing. The chain crosses the membrane as a helical span at residues 105–125 (VGFWVSFGLQFVNVKIILYGI). Over 126 to 141 (TALSTFVLPQTQALNW) the chain is Periplasmic. Residues 142 to 162 (VIGVSILLALIGTFGNVCWAL) traverse the membrane as a helical segment. The Cytoplasmic segment spans residues 163 to 176 (AGHLFQRAFRHYGR). The chain crosses the membrane as a helical span at residues 177–194 (QLNIILALLLVYCAVRIF). Position 195 (Tyr195) is a topological domain, periplasmic.

It belongs to the Rht family.

The protein resides in the cell inner membrane. The enzyme catalyses O-acetyl-L-serine(in) = O-acetyl-L-serine(out). It catalyses the reaction L-cysteine(in) = L-cysteine(out). Exporter of O-acetylserine (OAS) and cysteine. The protein is Cysteine/O-acetylserine efflux protein (eamB) of Salmonella choleraesuis (strain SC-B67).